A 227-amino-acid polypeptide reads, in one-letter code: Orotidine 5'-phosphate decarboxylase (227 aa).

Residues Asp-12, Lys-34, 61 to 70, Thr-117, Arg-178, Gln-187, Gly-207, and Arg-208 contribute to the substrate site; that span reads DLKLHDIPNT. Catalysis depends on Lys-63, which acts as the Proton donor.

Belongs to the OMP decarboxylase family. Type 1 subfamily. As to quaternary structure, homodimer.

The enzyme catalyses orotidine 5'-phosphate + H(+) = UMP + CO2. Its pathway is pyrimidine metabolism; UMP biosynthesis via de novo pathway; UMP from orotate: step 2/2. Functionally, catalyzes the decarboxylation of orotidine 5'-monophosphate (OMP) to uridine 5'-monophosphate (UMP). This Anaeromyxobacter sp. (strain K) protein is Orotidine 5'-phosphate decarboxylase.